The chain runs to 265 residues: Undecaprenyl-diphosphatase (265 aa).

The next 8 membrane-spanning stretches (helical) occupy residues F19 to G39, A42 to W62, I80 to A100, L108 to V128, M143 to F163, S181 to Y201, I220 to V240, and I243 to W263.

The protein belongs to the UppP family.

Its subcellular location is the cell inner membrane. The enzyme catalyses di-trans,octa-cis-undecaprenyl diphosphate + H2O = di-trans,octa-cis-undecaprenyl phosphate + phosphate + H(+). Its function is as follows. Catalyzes the dephosphorylation of undecaprenyl diphosphate (UPP). Confers resistance to bacitracin. The chain is Undecaprenyl-diphosphatase from Solidesulfovibrio magneticus (strain ATCC 700980 / DSM 13731 / RS-1) (Desulfovibrio magneticus).